An 802-amino-acid polypeptide reads, in one-letter code: MRVLWVLGLCCVLLTFGFVRADDEVDVDGTVEEDLGKSREGSRTDDEVVQREEEAIQLDGLNASQIRELREKSEKFAFQAEVNRMMKLIINSLYKNKEIFLRELISNASDALDKIRLISLTDENALAGNEELTVKIKCDKEKNLLHVTDTGVGMTREELVKNLGTIAKSGTSEFLNKMTEAQEDGQSTSELIGQFGVGFYSAFLVADKVIVTSKHNNDTQHIWESDSNEFSVIADPRGNTLGRGTTITLVLKEEASDYLELDTIKNLVRKYSQFINFPIYVWSSKTETVEEPLEEDEAAKEEKEESDDEAAVEEEEEEKKPKTKKVEKTVWDWELMNDIKPIWQRPSKEVEEDEYKAFYKSFSKESDDPMAYIHFTAEGEVTFKSILFVPTSAPRGLFDEYGSKKSDYIKLYVRRVFITDDFHDMMPKYLNFVKGVVDSDDLPLNVSRETLQQHKLLKVIRKKLVRKTLDMIKKIADEKYNDTFWKEFGTNIKLGVIEDHSNRTRLAKLLRFQSSHHSTDITSLDQYVERMKEKQDKIYFMAGSSRKEAESSPFVERLLKKGYEVIYLTEPVDEYCIQALPEFDGKRFQNVAKEGVKFDESEKTKESREATEKEFEPLLNWMKDKALKDKIEKAVVSQRLTESPCALVASQYGWSGNMERIMKAQAYQTGKDISTNYYASQKKTFEINPRHPLIRDMLRRIKEDEDDKTVMDLAVVLFETATLRSGYLLPDTKAYGDRIERMLRLSLNIDPEAQVEEEPEEEPEDTSEDAEDSEQDEGEEMDAGTEEEEEETEKESTEKDEL.

The first 21 residues, methionine 1–alanine 21, serve as a signal peptide directing secretion. An SRT pseudosubstrate motif motif is present at residues serine 42–threonine 44. Asparagine 62 carries N-linked (GlcNAc...) asparagine glycosylation. Serine 64 bears the Phosphoserine mark. An N-linked (GlcNAc...) asparagine glycan is attached at asparagine 107. The ATP site is built by asparagine 107, aspartate 149, and asparagine 162. Lysine 168 carries the N6-(2-hydroxyisobutyryl)lysine modification. At serine 172 the chain carries Phosphoserine. Position 199 (phenylalanine 199) interacts with ATP. Asparagine 217 carries an N-linked (GlcNAc...) asparagine glycan. The span at glutamate 290–glutamate 317 shows a compositional bias: acidic residues. A disordered region spans residues glutamate 290–threonine 323. A phosphoserine mark is found at serine 306 and serine 403. An N6-succinyllysine modification is found at lysine 404. Asparagine 445 carries an N-linked (GlcNAc...) asparagine glycan. Residue serine 447 is modified to Phosphoserine. Lysine 479 bears the N6-acetyllysine mark. 2 N-linked (GlcNAc...) asparagine glycosylation sites follow: asparagine 481 and asparagine 502. The residue at position 633 (lysine 633) is an N6-succinyllysine. A disordered region spans residues isoleucine 749–leucine 802. A compositionally biased stretch (acidic residues) spans alanine 753–glutamate 793. The residue at position 785 (threonine 785) is a Phosphothreonine. Positions lysine 799–leucine 802 match the Prevents secretion from ER motif.

The protein belongs to the heat shock protein 90 family. Homodimer; disulfide-linked. Component of an EIF2 complex at least composed of CELF1/CUGBP1, CALR, CALR3, EIF2S1, EIF2S2, HSP90B1 and HSPA5. Part of a large chaperone multiprotein complex comprising DNAJB11, HSP90B1, HSPA5, HYOU, PDIA2, PDIA4, PDIA6, PPIB, SDF2L1, UGGT1 and very small amounts of ERP29, but not, or at very low levels, CALR nor CANX. Hyperglycosylated form interacts with OS9; promoting its degradation by the endoplasmic reticulum associated degradation (ERAD). Interacts with AIMP1; regulates its retention in the endoplasmic reticulum. Interacts with CNPY3; this interaction is disrupted in the presence of ATP. Interacts with TLR4, TLR9 and TLR11, but not with TLR3. Interacts with MZB1 in a calcium-dependent manner. Interacts with METTL23. Interacts with IL1B; the interaction facilitates cargo translocation into the ERGIC. Interacts with EIF2AK3. Phosphorylated by CK2. Post-translationally, N-glycosylated cotranslationally at Asn-217 by STT3A-containing OST-A complex: this glycosylation is constitutive. In response to various stress, 5 additional facultative sites (Asn-62, Asn-107, Asn-445, Asn-481 and Asn-502) can be glycosylated post-translationally by STT3B-containing OST-B complex, leading to a hyperglycosylated form that is degraded by the ER-associated degradation (ERAD) pathway. In normal conditions, the OST-A complex together with CCDC134 prevent glycosylation at facultative sites during protein folding, thereby preventing hyperglycosylation. Mechanistically, nascent HSP90B1 is tethered during translation to a specialized CCDC134-containing translocon that forms a microenvironment for its folding, in which STT3A associates with the SRT pseudosubstrate motif, and prevents access to facultative glycosylation sites until folding is completed, rendering its facultative sites inaccessible to the OST-B complex.

Its subcellular location is the endoplasmic reticulum lumen. The protein localises to the sarcoplasmic reticulum lumen. It is found in the melanosome. It carries out the reaction ATP + H2O = ADP + phosphate + H(+). In terms of biological role, ATP-dependent chaperone involved in the processing of proteins in the endoplasmic reticulum, regulating their transport. Together with MESD, acts as a modulator of the Wnt pathway by promoting the folding of LRP6, a coreceptor of the canonical Wnt pathway. When associated with CNPY3, required for proper folding of Toll-like receptors. Promotes folding and trafficking of TLR4 to the cell surface. May participate in the unfolding of cytosolic leaderless cargos (lacking the secretion signal sequence) such as the interleukin 1/IL-1 to facilitate their translocation into the ERGIC (endoplasmic reticulum-Golgi intermediate compartment) and secretion; the translocation process is mediated by the cargo receptor TMED10. The polypeptide is Endoplasmin (Hsp90b1) (Mus musculus (Mouse)).